Consider the following 119-residue polypeptide: uncharacterized protein (119 aa).

This is an uncharacterized protein from Homo sapiens (Human).